Consider the following 174-residue polypeptide: Nucleoside-triphosphatase THEP1 (174 aa).

ATP is bound by residues 8–15 (GIPGIGKS) and 99–106 (LIVIDEVG).

Belongs to the THEP1 NTPase family.

The enzyme catalyses a ribonucleoside 5'-triphosphate + H2O = a ribonucleoside 5'-diphosphate + phosphate + H(+). In terms of biological role, has nucleotide phosphatase activity towards ATP, GTP, CTP, TTP and UTP. May hydrolyze nucleoside diphosphates with lower efficiency. The sequence is that of Nucleoside-triphosphatase THEP1 from Methanosarcina barkeri (strain Fusaro / DSM 804).